A 216-amino-acid polypeptide reads, in one-letter code: MDSNSRLMTFRRREMVEKLKLSGIADNRVLAAFLSVERHRFFDKESQEYAYADGAYPIGYGQTISQPYTVACMTSLLVERSPSGKVLEIGTGSGYQAAILYALGYRVYTIERVVELSEKAEKLFSALGFSIMCRSGDGTLGWPEEAPFDGIMVTAGAPHCPETLLHQLALDGSLVVPIGAHGLQKMTVFQRKKDRFEKEVFSDFAFVPLIGREGWG.

Residue S65 is part of the active site.

Belongs to the methyltransferase superfamily. L-isoaspartyl/D-aspartyl protein methyltransferase family.

Its subcellular location is the cytoplasm. The catalysed reaction is [protein]-L-isoaspartate + S-adenosyl-L-methionine = [protein]-L-isoaspartate alpha-methyl ester + S-adenosyl-L-homocysteine. Catalyzes the methyl esterification of L-isoaspartyl residues in peptides and proteins that result from spontaneous decomposition of normal L-aspartyl and L-asparaginyl residues. It plays a role in the repair and/or degradation of damaged proteins. This is Protein-L-isoaspartate O-methyltransferase from Chlorobium phaeobacteroides (strain DSM 266 / SMG 266 / 2430).